Reading from the N-terminus, the 248-residue chain is 2,3-bisphosphoglycerate-dependent phosphoglycerate mutase (248 aa).

Substrate-binding positions include 8 to 15 (RHGESQWN), 21 to 22 (TG), R60, 87 to 90 (ERHY), K98, 114 to 115 (RR), and 183 to 184 (GN). Catalysis depends on H9, which acts as the Tele-phosphohistidine intermediate. Residue E87 is the Proton donor/acceptor of the active site.

This sequence belongs to the phosphoglycerate mutase family. BPG-dependent PGAM subfamily. Homodimer.

The enzyme catalyses (2R)-2-phosphoglycerate = (2R)-3-phosphoglycerate. It functions in the pathway carbohydrate degradation; glycolysis; pyruvate from D-glyceraldehyde 3-phosphate: step 3/5. Catalyzes the interconversion of 2-phosphoglycerate and 3-phosphoglycerate. The protein is 2,3-bisphosphoglycerate-dependent phosphoglycerate mutase of Alteromonas mediterranea (strain DSM 17117 / CIP 110805 / LMG 28347 / Deep ecotype).